Reading from the N-terminus, the 927-residue chain is Echinoderm microtubule-associated protein-like 4 (927 aa).

The interval 1–189 (MDGFAGSLDD…IPSDVENYDD (189 aa)) is microtubule-binding. Residues 14-63 (AASTSDVQDRLSALELRVQQQEDEITVLKAALADVLRRLAISEDQVATVR) are a coiled coil. The disordered stretch occupies residues 85–132 (NGGAGTRKPSHASSVAKKDTLSSAAKSVKRSSTLEKSHNSWDASEESR). The segment covering 116 to 132 (STLEKSHNSWDASEESR) has biased composition (basic and acidic residues). 13 WD repeats span residues 199 to 237 (LKLE…LFNY), 241 to 288 (TQRH…VWDS), 296 to 336 (VIGL…VWDW), 343 to 378 (AEIK…FWTW), 385 to 424 (RKQG…IWSK), 442 to 480 (QISK…MWDH), 485 to 521 (EREI…LRGT), 524 to 563 (DGFQ…LWNS), 567 to 604 (SLEW…VLDA), 610 to 646 (VSIH…LYNV), 653 to 692 (YSRY…YWDI), 702 to 760 (RSEC…LFQY), and 767 to 806 (APSH…QWRL). The span at 815–829 (NDNIAESSSAVNSPV) shows a compositional bias: polar residues. Residues 815–927 (NDNIAESSSA…NQDDDDAPLS (113 aa)) are disordered. Residues 914–927 (AQDENQDDDDAPLS) show a composition bias toward acidic residues.

Belongs to the WD repeat EMAP family. As to quaternary structure, homotrimer; self-association is mediated by the N-terminal coiled coil.

The protein resides in the cytoplasm. Its subcellular location is the cytoskeleton. It localises to the spindle. The protein localises to the microtubule organizing center. It is found in the midbody. In terms of biological role, essential for the formation and stability of microtubules (MTs). Required for the organization of the mitotic spindle and for the proper attachment of kinetochores to MTs. Promotes the recruitment of NUDC to the mitotic spindle for mitotic progression. This Xenopus laevis (African clawed frog) protein is Echinoderm microtubule-associated protein-like 4 (eml4).